Here is a 138-residue protein sequence, read N- to C-terminus: uncharacterized protein (138 aa).

Residues 1–35 (MVAPAARVFLRAVRAALTSTVPDLLCLLARGSPRG) form the signal peptide.

In terms of tissue distribution, isoform 1 is highly expressed in small intestine, testis and kidney, medium expressed in brain and heart and low expressed in colon; it could not be detected in liver, adrenal gland and pancreas.

Its subcellular location is the secreted. This is an uncharacterized protein from Homo sapiens (Human).